Consider the following 198-residue polypeptide: Uracil phosphoribosyltransferase homolog (198 aa).

It belongs to the UPRTase family.

The protein resides in the plastid. Its subcellular location is the chloroplast. This is Uracil phosphoribosyltransferase homolog from Porphyra purpurea (Red seaweed).